We begin with the raw amino-acid sequence, 428 residues long: Histidine--tRNA ligase (428 aa).

It belongs to the class-II aminoacyl-tRNA synthetase family. Homodimer.

It is found in the cytoplasm. It catalyses the reaction tRNA(His) + L-histidine + ATP = L-histidyl-tRNA(His) + AMP + diphosphate + H(+). The protein is Histidine--tRNA ligase of Chromohalobacter salexigens (strain ATCC BAA-138 / DSM 3043 / CIP 106854 / NCIMB 13768 / 1H11).